We begin with the raw amino-acid sequence, 491 residues long: Angiopoietin-related protein 1 (491 aa).

Positions 1-23 (MKTFTWTLGVLFFLLVDTGHCRG) are cleaved as a signal peptide. The stretch at 80–168 (ITRMDLENLK…LNVTTEMLKM (89 aa)) forms a coiled coil. Asparagine 160 and asparagine 188 each carry an N-linked (GlcNAc...) asparagine glycan. A Fibrinogen C-terminal domain is found at 271–491 (FINEGPFKDC…AVQMMIKPID (221 aa)). Intrachain disulfides connect cysteine 280–cysteine 309 and cysteine 432–cysteine 445.

Highly expressed in adrenal gland, placenta, thyroid gland, heart, skeletal muscle and small intestine. Weakly expressed in testis, ovary, colon, pancreas, kidney and stomach.

It is found in the secreted. The protein is Angiopoietin-related protein 1 (ANGPTL1) of Homo sapiens (Human).